We begin with the raw amino-acid sequence, 541 residues long: Arginine--tRNA ligase (541 aa).

The 'HIGH' region signature appears at 119–129; sequence ANPTGPLHIGH.

The protein belongs to the class-I aminoacyl-tRNA synthetase family. In terms of assembly, monomer.

The protein resides in the cytoplasm. It carries out the reaction tRNA(Arg) + L-arginine + ATP = L-arginyl-tRNA(Arg) + AMP + diphosphate. In Helicobacter pylori (strain Shi470), this protein is Arginine--tRNA ligase.